A 238-amino-acid polypeptide reads, in one-letter code: MGKNLLQQRAGKGSPTFRSPSWLRIGKVRYPNIFGHLVGKVIDIVHNPGMNTPVAIIKLENGTKFLTQAIQGLVINQKIEFGKGSPIANGNVIEIGDAPEGTIVCNVEENFGDGGKYARSAGSYAVVVGKSGDKVLIKLPSDKIKAVSNKARATVGVVAGGGVVEKPLLKAGANYWKYKVKAKKWPIVRGVAMNVVDHPHGGGLHQSVSRPSTVSRNAPPGRKVGHIAARRTGRKEGK.

The tract at residues 200-238 (HGGGLHQSVSRPSTVSRNAPPGRKVGHIAARRTGRKEGK) is disordered. Positions 206-216 (QSVSRPSTVSR) are enriched in polar residues. A compositionally biased stretch (basic residues) spans 223 to 238 (KVGHIAARRTGRKEGK).

The protein belongs to the universal ribosomal protein uL2 family. Part of the 50S ribosomal subunit. Forms a bridge to the 30S subunit in the 70S ribosome.

Functionally, one of the primary rRNA binding proteins. Required for association of the 30S and 50S subunits to form the 70S ribosome, for tRNA binding and peptide bond formation. It has been suggested to have peptidyltransferase activity; this is somewhat controversial. Makes several contacts with the 16S rRNA in the 70S ribosome. This chain is Large ribosomal subunit protein uL2, found in Saccharolobus islandicus (strain Y.N.15.51 / Yellowstone #2) (Sulfolobus islandicus).